Here is a 113-residue protein sequence, read N- to C-terminus: Large ribosomal subunit protein uL22 (113 aa).

This sequence belongs to the universal ribosomal protein uL22 family. In terms of assembly, part of the 50S ribosomal subunit.

In terms of biological role, this protein binds specifically to 23S rRNA; its binding is stimulated by other ribosomal proteins, e.g. L4, L17, and L20. It is important during the early stages of 50S assembly. It makes multiple contacts with different domains of the 23S rRNA in the assembled 50S subunit and ribosome. The globular domain of the protein is located near the polypeptide exit tunnel on the outside of the subunit, while an extended beta-hairpin is found that lines the wall of the exit tunnel in the center of the 70S ribosome. This chain is Large ribosomal subunit protein uL22, found in Chloroflexus aggregans (strain MD-66 / DSM 9485).